The following is an 859-amino-acid chain: Chitin synthase 1 (859 aa).

The disordered stretch occupies residues 1 to 22 (MRRWFKKTLPRPPDEEESAGLT). The next 5 membrane-spanning stretches (helical) occupy residues 544-564 (LATIVFGWFNIGNFFIIFYIL), 615-635 (MVIMYSILMGYLLFCSGWIAY), 662-682 (FINIVISLSSTYGMYLVVSII), 793-813 (YVVLTWILSNLFLVGIVLSIP), and 833-853 (LWSVVAFSVFRFIGCIFYLFI).

The protein belongs to the chitin synthase family.

The protein resides in the cell membrane. The enzyme catalyses [(1-&gt;4)-N-acetyl-beta-D-glucosaminyl](n) + UDP-N-acetyl-alpha-D-glucosamine = [(1-&gt;4)-N-acetyl-beta-D-glucosaminyl](n+1) + UDP + H(+). Polymerizes chitin, a structural polymer of the cell wall and septum, by transferring the sugar moiety of UDP-GlcNAc to the non-reducing end of the growing chitin polymer. This Schizosaccharomyces pombe (strain 972 / ATCC 24843) (Fission yeast) protein is Chitin synthase 1 (chs1).